The following is an 835-amino-acid chain: Translation initiation factor IF-2 (835 aa).

Positions 1–240 (MSDSDGKKTL…RKQERARQKA (240 aa)) are disordered. A compositionally biased stretch (gly residues) spans 50–59 (AGKGGAGGVA). Over residues 86–152 (KAREAEEAAQ…AEAAKKRAAA (67 aa)) the composition is skewed to basic and acidic residues. Positions 153 to 169 (DKAAAAAPKSDAGVAPA) are enriched in low complexity. Residues 184–205 (RKAEREREERGRGAKGRNDGGR) are compositionally biased toward basic and acidic residues. In terms of domain architecture, tr-type G spans 332–500 (PRPPVITIMG…AIALQAEILE (169 aa)). A G1 region spans residues 341–348 (GHVDHGKT). A GTP-binding site is contributed by 341 to 348 (GHVDHGKT). Positions 366–370 (GITQH) are G2. Positions 388–391 (DTPG) are G3. GTP-binding positions include 388-392 (DTPGH) and 442-445 (NKID). The interval 442–445 (NKID) is G4. Positions 478–480 (SAH) are G5.

Belongs to the TRAFAC class translation factor GTPase superfamily. Classic translation factor GTPase family. IF-2 subfamily.

Its subcellular location is the cytoplasm. In terms of biological role, one of the essential components for the initiation of protein synthesis. Protects formylmethionyl-tRNA from spontaneous hydrolysis and promotes its binding to the 30S ribosomal subunits. Also involved in the hydrolysis of GTP during the formation of the 70S ribosomal complex. The polypeptide is Translation initiation factor IF-2 (Ruegeria sp. (strain TM1040) (Silicibacter sp.)).